A 298-amino-acid chain; its full sequence is Ethanolamine ammonia-lyase small subunit (298 aa).

Positions 1–19 (MDQKQIEEIVRSVMASMGQ) are targets protein to the BMC. Residues valine 210, glutamate 231, and cysteine 261 each coordinate adenosylcob(III)alamin.

Belongs to the EutC family. In terms of assembly, the basic unit is a heterodimer which dimerizes to form tetramers. The heterotetramers trimerize; 6 large subunits form a core ring with 6 small subunits projecting outwards. Interacts with EutS, which targets it to the interior of the BMC. Adenosylcob(III)alamin is required as a cofactor.

The protein localises to the bacterial microcompartment. The catalysed reaction is ethanolamine = acetaldehyde + NH4(+). Its pathway is amine and polyamine degradation; ethanolamine degradation. Its function is as follows. Catalyzes the deamination of various vicinal amino-alcohols to oxo compounds. It is spontaneously inactivated by its substrate and reactivated by EutA. May play a role in bacterial microcompartment (BMC) assembly or maintenance. Directly targeted to the BMC. Functionally, expression of the eut operon allows this bacteria to use ethanolamine (EA) as a carbon, nitrogen and energy source. It relies on cobalamin (vitamin B12) both as a cofactor for the ethanolamine ammonia-lyase activity and to induce the operon. EA enhances bacterial survival in macrophages in a concentration-dependent manner, suggesting it is an important nutrient during infection. This chain is Ethanolamine ammonia-lyase small subunit, found in Salmonella typhimurium (strain LT2 / SGSC1412 / ATCC 700720).